Here is a 342-residue protein sequence, read N- to C-terminus: L-threonine 3-dehydrogenase (342 aa).

Cys38 contacts Zn(2+). Active-site charge relay system residues include Thr40 and His43. Zn(2+) is bound by residues His63, Glu64, Cys93, Cys96, Cys99, and Cys107. NAD(+) contacts are provided by residues Ile175, Asp195, Arg200, 262–264 (LGI), and 286–287 (IY).

It belongs to the zinc-containing alcohol dehydrogenase family. In terms of assembly, homotetramer. It depends on Zn(2+) as a cofactor.

The protein localises to the cytoplasm. The enzyme catalyses L-threonine + NAD(+) = (2S)-2-amino-3-oxobutanoate + NADH + H(+). It functions in the pathway amino-acid degradation; L-threonine degradation via oxydo-reductase pathway; glycine from L-threonine: step 1/2. Catalyzes the NAD(+)-dependent oxidation of L-threonine to 2-amino-3-ketobutyrate. The polypeptide is L-threonine 3-dehydrogenase (Burkholderia ambifaria (strain ATCC BAA-244 / DSM 16087 / CCUG 44356 / LMG 19182 / AMMD) (Burkholderia cepacia (strain AMMD))).